The sequence spans 177 residues: Ribulose bisphosphate carboxylase small subunit, chloroplastic 3 (177 aa).

Residues 1 to 56 constitute a chloroplast transit peptide; that stretch reads MASSMMASTAAAVARAGPAQSSMVPFNACRSSVPFPATRKANNNLSTLPGNGGRVS.

It belongs to the RuBisCO small chain family. Heterohexadecamer of 8 large and 8 small subunits.

It is found in the plastid. Its subcellular location is the chloroplast. Functionally, ruBisCO catalyzes two reactions: the carboxylation of D-ribulose 1,5-bisphosphate, the primary event in carbon dioxide fixation, as well as the oxidative fragmentation of the pentose substrate. Both reactions occur simultaneously and in competition at the same active site. Although the small subunit is not catalytic it is essential for maximal activity. This Lemna gibba (Swollen duckweed) protein is Ribulose bisphosphate carboxylase small subunit, chloroplastic 3.